The primary structure comprises 548 residues: ATP synthase subunit alpha (548 aa).

172 to 179 (GDRKTGKT) serves as a coordination point for ATP. The interval 526–548 (AEAMDEADVEKESVKVRKPAPKK) is disordered.

The protein belongs to the ATPase alpha/beta chains family. In terms of assembly, F-type ATPases have 2 components, CF(1) - the catalytic core - and CF(0) - the membrane proton channel. CF(1) has five subunits: alpha(3), beta(3), gamma(1), delta(1), epsilon(1). CF(0) has three main subunits: a(1), b(2) and c(9-12). The alpha and beta chains form an alternating ring which encloses part of the gamma chain. CF(1) is attached to CF(0) by a central stalk formed by the gamma and epsilon chains, while a peripheral stalk is formed by the delta and b chains.

Its subcellular location is the cell membrane. The catalysed reaction is ATP + H2O + 4 H(+)(in) = ADP + phosphate + 5 H(+)(out). In terms of biological role, produces ATP from ADP in the presence of a proton gradient across the membrane. The alpha chain is a regulatory subunit. This chain is ATP synthase subunit alpha, found in Mycolicibacterium gilvum (strain PYR-GCK) (Mycobacterium gilvum (strain PYR-GCK)).